The sequence spans 198 residues: Recombination protein RecR (198 aa).

The C4-type zinc finger occupies 56–71; that stretch reads CKVCGNFSEEDECVIC. A Toprim domain is found at 79-174; the sequence is GVICVVEEPK…RVSKLASGLP (96 aa).

The protein belongs to the RecR family.

Functionally, may play a role in DNA repair. It seems to be involved in an RecBC-independent recombinational process of DNA repair. It may act with RecF and RecO. This is Recombination protein RecR from Tropheryma whipplei (strain Twist) (Whipple's bacillus).